The chain runs to 313 residues: UPF0252 protein AF_0384 (313 aa).

The protein belongs to the UPF0252 family.

The polypeptide is UPF0252 protein AF_0384 (Archaeoglobus fulgidus (strain ATCC 49558 / DSM 4304 / JCM 9628 / NBRC 100126 / VC-16)).